The following is a 352-amino-acid chain: Rhodopsin, freshwater form (352 aa).

At 1–36 (MNGTEGPNFYVPMSNVTGVVRSPFEYPQYYLAEPWA) the chain is on the extracellular side. 2 N-linked (GlcNAc...) asparagine glycosylation sites follow: asparagine 2 and asparagine 15. The helical transmembrane segment at 37 to 61 (YSALAAYMFFLIIAGFPINFLTLYV) threads the bilayer. The Cytoplasmic portion of the chain corresponds to 62–73 (TIEHKKLRTPLN). A helical membrane pass occupies residues 74-98 (YILLNLAVADLFMVFGGFTTTMYTS). At 99 to 113 (MHGYFVFGPTGCNIE) the chain is on the extracellular side. A disulfide bridge links cysteine 110 with cysteine 187. Residues 114–133 (GFFATLGGEIALWCLVVLAV) traverse the membrane as a helical segment. At 134 to 152 (ERWMVVCKPMSNFRFGENH) the chain is on the cytoplasmic side. A helical transmembrane segment spans residues 153–176 (AIMGVAFTWVMALACAAPPLFGWS). The Extracellular portion of the chain corresponds to 177 to 202 (RYIPEGMQCSCGMDHYAPNPETYNES). An N-linked (GlcNAc...) asparagine glycan is attached at asparagine 200. A helical transmembrane segment spans residues 203 to 230 (FVIYMFICHFTIPLTVISFCYGRLVCTV). The Cytoplasmic segment spans residues 231–252 (KEATAQQQESETTQRAEREVTR). The helical transmembrane segment at 253-276 (MVIIMVISFLVCWVPYASVAWYIF) threads the bilayer. The Extracellular segment spans residues 277-284 (THQGSSFG). The helical transmembrane segment at 285-309 (PIFMTIPAFFAKSSSLYNPLIYICM) threads the bilayer. Position 296 is an N6-(retinylidene)lysine (lysine 296). Over 310–352 (NKQSRNCMITTLCCGKNPFEEEEGASTTASKTEASSVSSVSPA) the chain is Cytoplasmic. Residue cysteine 323 is the site of S-palmitoyl cysteine attachment. The segment at 330 to 352 (EEEGASTTASKTEASSVSSVSPA) is disordered. Residues 334-352 (ASTTASKTEASSVSSVSPA) show a composition bias toward low complexity.

The protein belongs to the G-protein coupled receptor 1 family. Opsin subfamily. Post-translationally, phosphorylated on some or all of the serine and threonine residues present in the C-terminal region. In terms of tissue distribution, rod shaped photoreceptor cells which mediates vision in dim light.

Its subcellular location is the membrane. In terms of biological role, visual pigments such as rhodopsin and porphyropsin are light-absorbing molecules that mediate vision. Rhodopsin consists of an apoprotein, opsin, covalently linked to 11-cis-retinal. This receptor is coupled to the activation of phospholipase C. Porphyropsin consists of opsin covalently linked to 11-cis 3,4-didehydroretinal. The sequence is that of Rhodopsin, freshwater form from Anguilla anguilla (European freshwater eel).